We begin with the raw amino-acid sequence, 205 residues long: DUF724 domain-containing protein 4 (205 aa).

Residues 28–59 (DASGRGKRRRVEQEHHSDLNNETAAPTGGSAG) form a disordered region. A DUF724 domain is found at 63–189 (VLPFTKTLAS…MADDYSKLKK (127 aa)).

In terms of tissue distribution, expressed in roots, leaves, stems, flowers and siliques.

It localises to the nucleus. Its function is as follows. May be involved in the polar growth of plant cells via transportation of RNAs. In Arabidopsis thaliana (Mouse-ear cress), this protein is DUF724 domain-containing protein 4.